The following is a 488-amino-acid chain: Inosine-5'-monophosphate dehydrogenase (488 aa).

CBS domains lie at 95 to 153 (VISN…SIKI) and 157 to 216 (MTKE…AKDE). NAD(+)-binding positions include D250 and 300–302 (GIG). Residues G302 and G304 each coordinate K(+). S305 is an IMP binding site. C307 provides a ligand contact to K(+). The active-site Thioimidate intermediate is the C307. IMP contacts are provided by residues 340–342 (DGG), 363–364 (GS), and 387–391 (YRGMG). R403 functions as the Proton acceptor in the catalytic mechanism. Position 417 (E417) interacts with IMP. Residues 467–488 (AGLAESHPHDVQITKESPNYSF) form a disordered region. Positions 471, 472, and 473 each coordinate K(+).

This sequence belongs to the IMPDH/GMPR family. Homotetramer. The cofactor is K(+).

It catalyses the reaction IMP + NAD(+) + H2O = XMP + NADH + H(+). It participates in purine metabolism; XMP biosynthesis via de novo pathway; XMP from IMP: step 1/1. Mycophenolic acid (MPA) is a non-competitive inhibitor that prevents formation of the closed enzyme conformation by binding to the same site as the amobile flap. In contrast, mizoribine monophosphate (MZP) is a competitive inhibitor that induces the closed conformation. MPA is a potent inhibitor of mammalian IMPDHs but a poor inhibitor of the bacterial enzymes. MZP is a more potent inhibitor of bacterial IMPDH. In terms of biological role, catalyzes the conversion of inosine 5'-phosphate (IMP) to xanthosine 5'-phosphate (XMP), the first committed and rate-limiting step in the de novo synthesis of guanine nucleotides, and therefore plays an important role in the regulation of cell growth. The protein is Inosine-5'-monophosphate dehydrogenase of Staphylococcus saprophyticus subsp. saprophyticus (strain ATCC 15305 / DSM 20229 / NCIMB 8711 / NCTC 7292 / S-41).